A 382-amino-acid polypeptide reads, in one-letter code: ATP phosphoribosyltransferase regulatory subunit (382 aa).

The protein belongs to the class-II aminoacyl-tRNA synthetase family. HisZ subfamily. In terms of assembly, heteromultimer composed of HisG and HisZ subunits.

Its subcellular location is the cytoplasm. It functions in the pathway amino-acid biosynthesis; L-histidine biosynthesis; L-histidine from 5-phospho-alpha-D-ribose 1-diphosphate: step 1/9. Required for the first step of histidine biosynthesis. May allow the feedback regulation of ATP phosphoribosyltransferase activity by histidine. The protein is ATP phosphoribosyltransferase regulatory subunit of Burkholderia ambifaria (strain MC40-6).